The primary structure comprises 394 residues: S-adenosylmethionine synthase (394 aa).

His-16 is a binding site for ATP. Position 18 (Asp-18) interacts with Mg(2+). Residue Glu-44 coordinates K(+). L-methionine is bound by residues Glu-57 and Gln-100. Residues 100-110 form a flexible loop region; the sequence is QSPDIAQGVDA. Residues 172–174, 239–240, Asp-248, 254–255, Ala-271, and Lys-275 each bind ATP; these read DAK, RF, and RK. Asp-248 lines the L-methionine pocket. Lys-279 lines the L-methionine pocket.

It belongs to the AdoMet synthase family. As to quaternary structure, homotetramer; dimer of dimers. Mg(2+) serves as cofactor. Requires K(+) as cofactor.

The protein resides in the cytoplasm. The catalysed reaction is L-methionine + ATP + H2O = S-adenosyl-L-methionine + phosphate + diphosphate. It participates in amino-acid biosynthesis; S-adenosyl-L-methionine biosynthesis; S-adenosyl-L-methionine from L-methionine: step 1/1. Its function is as follows. Catalyzes the formation of S-adenosylmethionine (AdoMet) from methionine and ATP. The overall synthetic reaction is composed of two sequential steps, AdoMet formation and the subsequent tripolyphosphate hydrolysis which occurs prior to release of AdoMet from the enzyme. This is S-adenosylmethionine synthase from Enterococcus faecalis (strain ATCC 700802 / V583).